The sequence spans 1614 residues: Adenylate cyclase type 10 (1614 aa).

Guanylate cyclase domains follow at residues 42–179 (VLMF…RLAQ) and 293–418 (TIVF…ARMM). Positions 47 and 48 each coordinate Mg(2+). 47–52 (DISGFT) is a binding site for ATP. Lys95 provides a ligand contact to hydrogencarbonate. Residue Asp99 participates in Mg(2+) binding. Positions 99 and 144 each coordinate ATP. Residues Val167, Arg176, and Met337 each coordinate hydrogencarbonate. Residues Val406 and 412–416 (NIAAR) contribute to the ATP site.

Belongs to the adenylyl cyclase class-4/guanylyl cyclase family. Mg(2+) serves as cofactor. It depends on Mn(2+) as a cofactor. As to expression, expressed in testis.

Its subcellular location is the cell membrane. It localises to the cytoplasm. The protein localises to the cytoskeleton. It is found in the perinuclear region. The protein resides in the nucleus. Its subcellular location is the cell projection. It localises to the cilium. The protein localises to the mitochondrion. The catalysed reaction is ATP = 3',5'-cyclic AMP + diphosphate. With respect to regulation, activated by manganese or magnesium ions. In the presence of magnesium ions, the enzyme is activated by bicarbonate. Calcium mildly increases the enzyme activity, also in the presence of magnesium ions. Functionally, catalyzes the formation of the signaling molecule cAMP. May function as sensor that mediates responses to changes in cellular bicarbonate and CO(2) levels. Has a critical role in mammalian spermatogenesis by producing the cAMP which regulates cAMP-responsive nuclear factors indispensable for sperm maturation in the epididymis. Induces capacitation, the maturational process that sperm undergo prior to fertilization. Involved in ciliary beat regulation. The polypeptide is Adenylate cyclase type 10 (Adcy10) (Mus musculus (Mouse)).